The chain runs to 231 residues: S-norcoclaurine synthase 2 (231 aa).

Residue 107–109 coordinates dopamine; it reads YKE. The active-site Proton donor is the Lys121. Residue Asp140 participates in (4-hydroxyphenyl)acetaldehyde binding. The chain crosses the membrane as a helical span at residues 210 to 230; it reads LLLCLIICLVIAGGMFVAGVP.

It belongs to the BetVI family. In terms of tissue distribution, expressed in roots, stems and leaves. Detected in flower buds and germinating seeds. Low expression in carpels. Restricted to sieve elements of the phloem adjacent or proximal to laticifers.

It localises to the endoplasmic reticulum membrane. The protein resides in the vacuole membrane. It carries out the reaction (4-hydroxyphenyl)acetaldehyde + dopamine = (S)-norcoclaurine + H2O. Its pathway is alkaloid biosynthesis; (S)-reticuline biosynthesis. Its activity is regulated as follows. Activity doubles within 5 hours of elicitor treatment and continues to increase for at least 80 hours. In terms of biological role, involved in the biosynthesis of (S)-coclaurine, the common precursor of all benzylisoquinoline alkaloids such as morphine, sanguinarine, codeine or papaverine. Condenses dopamine and 4-hydroxyphenylacetaldehyde. The chain is S-norcoclaurine synthase 2 from Papaver somniferum (Opium poppy).